The chain runs to 334 residues: GTP 3',8-cyclase (334 aa).

The Radical SAM core domain occupies 13-239; the sequence is RFHRKFYYLR…KVKAVNDGPA (227 aa). Arg-22 is a GTP binding site. [4Fe-4S] cluster is bound by residues Cys-29 and Cys-33. Tyr-35 provides a ligand contact to S-adenosyl-L-methionine. Position 36 (Cys-36) interacts with [4Fe-4S] cluster. Arg-73 provides a ligand contact to GTP. Gly-77 contacts S-adenosyl-L-methionine. Thr-104 is a GTP binding site. Ser-128 lines the S-adenosyl-L-methionine pocket. Lys-165 is a GTP binding site. Met-199 contributes to the S-adenosyl-L-methionine binding site. [4Fe-4S] cluster contacts are provided by Cys-262 and Cys-265. A GTP-binding site is contributed by 267–269; it reads RLR. A [4Fe-4S] cluster-binding site is contributed by Cys-279.

The protein belongs to the radical SAM superfamily. MoaA family. As to quaternary structure, monomer and homodimer. [4Fe-4S] cluster serves as cofactor.

It catalyses the reaction GTP + AH2 + S-adenosyl-L-methionine = (8S)-3',8-cyclo-7,8-dihydroguanosine 5'-triphosphate + 5'-deoxyadenosine + L-methionine + A + H(+). It functions in the pathway cofactor biosynthesis; molybdopterin biosynthesis. In terms of biological role, catalyzes the cyclization of GTP to (8S)-3',8-cyclo-7,8-dihydroguanosine 5'-triphosphate. This Vibrio atlanticus (strain LGP32) (Vibrio splendidus (strain Mel32)) protein is GTP 3',8-cyclase.